Consider the following 208-residue polypeptide: Imidazole glycerol phosphate synthase subunit HisH (208 aa).

The Glutamine amidotransferase type-1 domain occupies 1 to 206 (MFAIVDYDTG…KEMVSANDFS (206 aa)). C79 (nucleophile) is an active-site residue. Active-site residues include H181 and E183.

As to quaternary structure, heterodimer of HisH and HisF.

The protein localises to the cytoplasm. The enzyme catalyses 5-[(5-phospho-1-deoxy-D-ribulos-1-ylimino)methylamino]-1-(5-phospho-beta-D-ribosyl)imidazole-4-carboxamide + L-glutamine = D-erythro-1-(imidazol-4-yl)glycerol 3-phosphate + 5-amino-1-(5-phospho-beta-D-ribosyl)imidazole-4-carboxamide + L-glutamate + H(+). It carries out the reaction L-glutamine + H2O = L-glutamate + NH4(+). It participates in amino-acid biosynthesis; L-histidine biosynthesis; L-histidine from 5-phospho-alpha-D-ribose 1-diphosphate: step 5/9. IGPS catalyzes the conversion of PRFAR and glutamine to IGP, AICAR and glutamate. The HisH subunit catalyzes the hydrolysis of glutamine to glutamate and ammonia as part of the synthesis of IGP and AICAR. The resulting ammonia molecule is channeled to the active site of HisF. This chain is Imidazole glycerol phosphate synthase subunit HisH, found in Lactiplantibacillus plantarum (strain ATCC BAA-793 / NCIMB 8826 / WCFS1) (Lactobacillus plantarum).